A 122-amino-acid chain; its full sequence is Large ribosomal subunit protein uL14 (122 aa).

The protein belongs to the universal ribosomal protein uL14 family. Part of the 50S ribosomal subunit. Forms a cluster with proteins L3 and L19. In the 70S ribosome, L14 and L19 interact and together make contacts with the 16S rRNA in bridges B5 and B8.

Its function is as follows. Binds to 23S rRNA. Forms part of two intersubunit bridges in the 70S ribosome. This chain is Large ribosomal subunit protein uL14, found in Rickettsia felis (strain ATCC VR-1525 / URRWXCal2) (Rickettsia azadi).